We begin with the raw amino-acid sequence, 364 residues long: Dimethylsulfoniopropionate demethylase DmdA (364 aa).

The protein belongs to the GcvT family. DmdA subfamily.

The catalysed reaction is S,S-dimethyl-beta-propiothetin + (6S)-5,6,7,8-tetrahydrofolate = 3-(methylsulfanyl)propanoate + (6S)-5-methyl-5,6,7,8-tetrahydrofolate + H(+). In terms of biological role, involved in the assimilation of dimethylsulphoniopropionate (DMSP), an important compound in the fixation of carbon in marine phytoplankton, by mediating demethylation of dimethylsulfoniopropionate (DMSP) to methyl-mercaptopropionate (MMPA). The intracellular concentration of DMSP is estimated to be 70 mM. The protein is Dimethylsulfoniopropionate demethylase DmdA of Ruegeria pomeroyi (strain ATCC 700808 / DSM 15171 / DSS-3) (Silicibacter pomeroyi).